We begin with the raw amino-acid sequence, 96 residues long: Co-chaperonin GroES 1 (96 aa).

This sequence belongs to the GroES chaperonin family. In terms of assembly, heptamer of 7 subunits arranged in a ring. Interacts with the chaperonin GroEL.

Its subcellular location is the cytoplasm. In terms of biological role, together with the chaperonin GroEL, plays an essential role in assisting protein folding. The GroEL-GroES system forms a nano-cage that allows encapsulation of the non-native substrate proteins and provides a physical environment optimized to promote and accelerate protein folding. GroES binds to the apical surface of the GroEL ring, thereby capping the opening of the GroEL channel. The chain is Co-chaperonin GroES 1 from Vibrio cholerae serotype O1 (strain ATCC 39315 / El Tor Inaba N16961).